The following is a 156-amino-acid chain: Aspartate carbamoyltransferase regulatory chain (156 aa).

Positions 109, 114, 138, and 141 each coordinate Zn(2+).

This sequence belongs to the PyrI family. As to quaternary structure, contains catalytic and regulatory chains. Zn(2+) serves as cofactor.

Involved in allosteric regulation of aspartate carbamoyltransferase. The chain is Aspartate carbamoyltransferase regulatory chain from Baumannia cicadellinicola subsp. Homalodisca coagulata.